A 513-amino-acid chain; its full sequence is Glucose-1-phosphate adenylyltransferase small subunit, chloroplastic/amyloplastic (513 aa).

The N-terminal 64 residues, 1–64 (MAMAAAASPS…RRPFFFSPRA (64 aa)), are a transit peptide targeting the chloroplast.

It belongs to the bacterial/plant glucose-1-phosphate adenylyltransferase family. In terms of assembly, heterotetramer. Leaves and starchy endosperm.

It is found in the plastid. The protein localises to the chloroplast. The protein resides in the amyloplast. The enzyme catalyses alpha-D-glucose 1-phosphate + ATP + H(+) = ADP-alpha-D-glucose + diphosphate. The protein operates within glycan biosynthesis; starch biosynthesis. Activated by 3'phosphoglycerate, inhibited by orthophosphate. Allosteric regulation. Functionally, this protein plays a role in synthesis of starch. It catalyzes the synthesis of the activated glycosyl donor, ADP-glucose from Glc-1-P and ATP. The chain is Glucose-1-phosphate adenylyltransferase small subunit, chloroplastic/amyloplastic from Hordeum vulgare (Barley).